A 257-amino-acid chain; its full sequence is Methylthioribulose-1-phosphate dehydratase (257 aa).

A disordered region spans residues 1–33; that stretch reads MVSSQEKMASISDIIQKDEDSGSEKTESQDKEH. Residues 15 to 33 show a composition bias toward basic and acidic residues; the sequence is IQKDEDSGSEKTESQDKEH. Cys107 lines the substrate pocket. Zn(2+) contacts are provided by His125 and His127. The Proton donor/acceptor role is filled by Glu149. His205 lines the Zn(2+) pocket.

This sequence belongs to the aldolase class II family. MtnB subfamily. Zn(2+) is required as a cofactor.

It is found in the cytoplasm. It carries out the reaction 5-(methylsulfanyl)-D-ribulose 1-phosphate = 5-methylsulfanyl-2,3-dioxopentyl phosphate + H2O. Its pathway is amino-acid biosynthesis; L-methionine biosynthesis via salvage pathway; L-methionine from S-methyl-5-thio-alpha-D-ribose 1-phosphate: step 2/6. In terms of biological role, catalyzes the dehydration of methylthioribulose-1-phosphate (MTRu-1-P) into 2,3-diketo-5-methylthiopentyl-1-phosphate (DK-MTP-1-P). Functions in the methionine salvage pathway. May play a role in apoptosis. The sequence is that of Methylthioribulose-1-phosphate dehydratase from Esox lucius (Northern pike).